Consider the following 80-residue polypeptide: Large ribosomal subunit protein eL13 (80 aa).

It belongs to the eukaryotic ribosomal protein eL13 family.

This is Large ribosomal subunit protein eL13 from Aeropyrum pernix (strain ATCC 700893 / DSM 11879 / JCM 9820 / NBRC 100138 / K1).